A 1135-amino-acid polypeptide reads, in one-letter code: Retinoblastoma-like protein 2 (1135 aa).

Residues 1–43 are disordered; the sequence is MASGGNQSPPPPPAAAASSEEEEEDGDAADRAQPAGSPSHQIQ. Residue S410 is modified to Phosphoserine. The residue at position 414 (T414) is a Phosphothreonine. A domain A region spans residues 414–613; sequence TPVSTAAHSL…DRIRDNENRV (200 aa). The tract at residues 414 to 1021 is pocket; binds E1A; sequence TPVSTAAHSL…QAFAMKYSQA (608 aa). Residue S417 is glycosylated (O-linked (GlcNAc) serine). A spacer region spans residues 614–824; it reads PTCEEVMPPQ…PGQPLTSSSI (211 aa). S636 carries the phosphoserine modification. Residue T639 is modified to Phosphothreonine. A phosphoserine mark is found at S659, S669, S684, S942, S946, S960, S965, and S967. Polar residues-rich tracts occupy residues 661–674, 683–692, 935–950, and 958–969; these read TTLY…TVST, DSPSEGSTSG, SGSS…PTEL, and DSSPVMRSNSTL. 2 disordered regions span residues 661 to 698 and 930 to 994; these read TTLY…PPQP and GKRR…VEEE. A domain B region spans residues 825 to 1021; that stretch reads RPRKTSSLAL…QAFAMKYSQA (197 aa). A Phosphothreonine modification is found at T968. The segment covering 971–981 has biased composition (pro residues); sequence VPQPSSAPPTP. Phosphoserine occurs at positions 975 and 976. Residue T980 is modified to Phosphothreonine. A phosphoserine mark is found at S1031, S1064, S1076, and S1108.

The protein belongs to the retinoblastoma protein (RB) family. As to quaternary structure, interacts with AATF and RINT1. Component of the DREAM complex (also named LINC complex) at least composed of E2F4, E2F5, LIN9, LIN37, LIN52, LIN54, MYBL1, MYBL2, RBL1, RBL2, RBBP4, TFDP1 and TFDP2. The complex exists in quiescent cells where it represses cell cycle-dependent genes. It dissociates in S phase when LIN9, LIN37, LIN52 and LIN54 form a subcomplex that binds to MYBL2. Interacts with USP4. Interacts with KMT5B, KMT5C and USP4. Interacts with PML. Interacts with RBBP9. Interacts with CD53. Post-translationally, during G0 and early G1 phase of the cell cycle, phosphorylated on Ser-636 and on 5 sites within the domain B. Phosphorylation on Ser-669 in G1 leads to its ubiquitin-dependent proteolysis.

It localises to the nucleus. Functionally, key regulator of entry into cell division. Directly involved in heterochromatin formation by maintaining overall chromatin structure and, in particular, that of constitutive heterochromatin by stabilizing histone methylation. Recruits and targets histone methyltransferases KMT5B and KMT5C, leading to epigenetic transcriptional repression. Controls histone H4 'Lys-20' trimethylation. Probably acts as a transcription repressor by recruiting chromatin-modifying enzymes to promoters. Potent inhibitor of E2F-mediated trans-activation, associates preferentially with E2F5. Binds to cyclins A and E. Binds to and may be involved in the transforming capacity of the adenovirus E1A protein. May act as a tumor suppressor. This Mus musculus (Mouse) protein is Retinoblastoma-like protein 2 (Rbl2).